Consider the following 989-residue polypeptide: MDRQSLRTTLRAMDASNENGSAKGAKKTTIGSFVRWTFGFNSVPLTTLVTITTVLLGLLVYVSTSVNPPDVTEAQKPLLNYAWAQLGEISRYPHPYFSHDNDRVRQHILKEVYTLAGREHFEGAQIEVDDSQTDIFIQKEDVFDKSAPPGKLTYFEGNNVVVRLSSKNSDKSLGAILLSAHFDSVPSSFGVTDDGAGIATMLAVLKHALAQNEGPKRDIIFNFNNNEEFGLLGAEAFMHHPWAQNVSAFINLEGTGAGGKAILFRASDYGVASHYSAAEMPFASSVYQEGFSNGFIHSQTDYKVYTEGGLRGLDIAFYKPRALYHTRRDNIAETTKNALNHMLVNTIDVTQSMTEADSFDHADQPAVFSDIGGYLFIILPLQYIFVISCLTLAVGPIFVGFLFLLVLRKQINAGTSETILGGWLRSIVSVLVSVVATYFVVETLHLGNELYVVRSFYTPLFAGLGTFIFVNYVLLGFFHFVRPVCDQKLIILLELSVVLWVLLLLSVIHEATHKATGEYHFLILYIVVATASILGLFGHLVTSTETSTFVEGPEDEEDTVDASEATETSPLLPEASPDNAAPSIHGAVDPENQQEDKTLQKIAVSMGYDWSIQFLLVVPITFFVTFGLAASLLDGLHQTPLESEKSADFVYTTITAMSVLVGITFLPFVHKLQVFVPIVVVGVAVTASFVHILSPPFSSNAPAKMRFVQNINLDEGTSYANVLGRQDVLQEVLEYIPSTDTFKPNCSSRGDGVEICNYIAPRPWLIDGEKVSSDGDFAGLPTNLLDVKVVPVNETSSGPFDRFDGRFKISALNNRGCVLRFNTTRFKSGDVETGVSPVKMVTLRHNRVGKTGITTGSGSRFSMFGWTRDPKTGKDEFRSFMHGVDDVTLHKLDWEDPEYDIQLSWIPRWYEVGDPEDEGNEALKNRLGVTVTCSWAEYLDPSSIVDEQGRRRTMDKIPAFTELNNFSPAWSIWSNQGRGLVEVSKYVEL.

The segment at methionine 1–alanine 25 is disordered. Residues methionine 1–asparagine 41 lie on the Cytoplasmic side of the membrane. The chain crosses the membrane as a helical span at residues serine 42–valine 62. The Vacuolar portion of the chain corresponds to serine 63–tyrosine 383. Positions 181 and 193 each coordinate Zn(2+). Glutamate 227 functions as the Proton acceptor in the catalytic mechanism. Residue glutamate 228 participates in Zn(2+) binding. Asparagine 245 carries N-linked (GlcNAc...) asparagine glycosylation. Glutamate 253 and histidine 325 together coordinate Zn(2+). The chain crosses the membrane as a helical span at residues isoleucine 384–leucine 404. Topologically, residues leucine 405–serine 426 are cytoplasmic. Residues isoleucine 427 to glycine 447 traverse the membrane as a helical segment. Topologically, residues asparagine 448–leucine 460 are vacuolar. Residues phenylalanine 461 to valine 481 traverse the membrane as a helical segment. Residues arginine 482–lysine 488 are Cytoplasmic-facing. Residues leucine 489 to histidine 509 form a helical membrane-spanning segment. The Vacuolar portion of the chain corresponds to glutamate 510 to histidine 520. A helical transmembrane segment spans residues phenylalanine 521–valine 541. Topologically, residues threonine 542–serine 611 are cytoplasmic. Residues threonine 548–serine 576 are disordered. Residues glycine 552–aspartate 561 are compositionally biased toward acidic residues. The chain crosses the membrane as a helical span at residues isoleucine 612 to leucine 632. The Vacuolar portion of the chain corresponds to leucine 633–aspartate 648. Residues phenylalanine 649–valine 669 traverse the membrane as a helical segment. Over histidine 670–glutamine 673 the chain is Cytoplasmic. The chain crosses the membrane as a helical span at residues valine 674–serine 694. Residues proline 695–leucine 989 are Vacuolar-facing. N-linked (GlcNAc...) asparagine glycans are attached at residues asparagine 745, asparagine 793, and asparagine 822.

This sequence belongs to the peptidase M28 family. It depends on Zn(2+) as a cofactor.

The protein localises to the vacuole membrane. Functionally, may be involved in vacuolar sorting and osmoregulation. This chain is Vacuolar membrane protease, found in Yarrowia lipolytica (strain CLIB 122 / E 150) (Yeast).